The following is a 1155-amino-acid chain: DNA-directed RNA polymerase subunit beta (1155 aa).

The protein belongs to the RNA polymerase beta chain family. The RNAP catalytic core consists of 2 alpha, 1 beta, 1 beta' and 1 omega subunit. When a sigma factor is associated with the core the holoenzyme is formed, which can initiate transcription.

It catalyses the reaction RNA(n) + a ribonucleoside 5'-triphosphate = RNA(n+1) + diphosphate. DNA-dependent RNA polymerase catalyzes the transcription of DNA into RNA using the four ribonucleoside triphosphates as substrates. This is DNA-directed RNA polymerase subunit beta from Borrelia duttonii (strain Ly).